A 315-amino-acid chain; its full sequence is Thioredoxin reductase (315 aa).

45–52 (EGSTPGGK) is a binding site for FAD. A disulfide bridge links Cys-145 with Cys-148. Residue 288–297 (DCRSKHFRQI) coordinates FAD.

This sequence belongs to the class-II pyridine nucleotide-disulfide oxidoreductase family. Homodimer. Requires FAD as cofactor.

It localises to the cytoplasm. It carries out the reaction [thioredoxin]-dithiol + NADP(+) = [thioredoxin]-disulfide + NADPH + H(+). This is Thioredoxin reductase (trxB) from Mycoplasma pneumoniae (strain ATCC 29342 / M129 / Subtype 1) (Mycoplasmoides pneumoniae).